The following is a 447-amino-acid chain: Probable protein phosphatase 2C 71 (447 aa).

The PPM-type phosphatase domain maps to 33–279; it reads SYGYASSAGK…DNITCVVVRF (247 aa). Mn(2+) is bound by residues aspartate 69, glycine 70, aspartate 231, and aspartate 270. The segment covering 284 to 297 has biased composition (low complexity); that stretch reads SANNNGSSSSEEAN. The segment at 284-447 is disordered; the sequence is SANNNGSSSS…ARKTTPSIFN (164 aa). Residues 305-331 show a composition bias toward basic and acidic residues; it reads NDSDHKISAKETNQDHTTVNKDLDRNT. Composition is skewed to polar residues over residues 346–374 and 392–423; these read ADNS…TGEK and KVPN…GSTG. Positions 424–438 are enriched in basic and acidic residues; the sequence is ERNRKPIKVHSDSAA.

This sequence belongs to the PP2C family. It depends on Mg(2+) as a cofactor. Mn(2+) is required as a cofactor.

The catalysed reaction is O-phospho-L-seryl-[protein] + H2O = L-seryl-[protein] + phosphate. The enzyme catalyses O-phospho-L-threonyl-[protein] + H2O = L-threonyl-[protein] + phosphate. This chain is Probable protein phosphatase 2C 71, found in Arabidopsis thaliana (Mouse-ear cress).